The chain runs to 545 residues: Protein FAR1-RELATED SEQUENCE 9 (545 aa).

The region spanning 22-65 (LNYLKRRQLENPGFLYAIEDDCGNVFWADPTCRLNYTYFGDTLV) is the FAR1 domain. One can recognise an MULE domain in the interval 66–150 (FDTTYRRGKR…RVFSQTRLRF (85 aa)). The SWIM-type zinc finger occupies 345–381 (HTVSFDSLEVKANCSCQMFEYSGIICRHILAVFSAKN). Residues 460-495 (SNRTPGTRLPNGEAYPSEEARETANATNHPGGEKER) are disordered. Residues 492 to 545 (EKERTILELTAELERTGQRCEVYRANLLSILRDMEEQKFQLSLKVQNARLSLKE) are a coiled coil.

The protein belongs to the FHY3/FAR1 family. In terms of tissue distribution, expressed in hypocotyls, rosette and cauline leaves, inflorescences stems, flowers and siliques.

The protein localises to the nucleus. Functionally, putative transcription activator involved in regulating light control of development. May act as a negative regulator specific to phyB signaling. The sequence is that of Protein FAR1-RELATED SEQUENCE 9 (FRS9) from Arabidopsis thaliana (Mouse-ear cress).